The following is a 393-amino-acid chain: NAD(P)H-quinone oxidoreductase subunit H, chloroplastic (393 aa).

It belongs to the complex I 49 kDa subunit family. NDH is composed of at least 16 different subunits, 5 of which are encoded in the nucleus.

It localises to the plastid. Its subcellular location is the chloroplast thylakoid membrane. The catalysed reaction is a plastoquinone + NADH + (n+1) H(+)(in) = a plastoquinol + NAD(+) + n H(+)(out). The enzyme catalyses a plastoquinone + NADPH + (n+1) H(+)(in) = a plastoquinol + NADP(+) + n H(+)(out). Functionally, NDH shuttles electrons from NAD(P)H:plastoquinone, via FMN and iron-sulfur (Fe-S) centers, to quinones in the photosynthetic chain and possibly in a chloroplast respiratory chain. The immediate electron acceptor for the enzyme in this species is believed to be plastoquinone. Couples the redox reaction to proton translocation, and thus conserves the redox energy in a proton gradient. This is NAD(P)H-quinone oxidoreductase subunit H, chloroplastic from Ceratophyllum demersum (Rigid hornwort).